The primary structure comprises 413 residues: Na(+)-translocating NADH-quinone reductase subunit B (413 aa).

Transmembrane regions (helical) follow at residues 56 to 76 (MMILVWFAVFPAMFWGMYNVG), 123 to 143 (LLGAAYFLPIYAVVFLVGGFW), and 169 to 189 (IVPPTLPLWQAALGISFGVVI). An FMN phosphoryl threonine modification is found at T236. 5 helical membrane passes run 270–290 (GSIGEVSTLMILIGGAIIIFG), 297–317 (IVAGVMIGMIATAYLFNWIGS), 322–342 (LFAMPWYWHLVLGGFAFGMIF), 358–378 (WWYGGLIGVMCILIRVANPAY), and 381–401 (GMMLAILFANLFAPLFDYVVV).

It belongs to the NqrB/RnfD family. Composed of six subunits; NqrA, NqrB, NqrC, NqrD, NqrE and NqrF. Requires FMN as cofactor.

It localises to the cell inner membrane. The enzyme catalyses a ubiquinone + n Na(+)(in) + NADH + H(+) = a ubiquinol + n Na(+)(out) + NAD(+). Its function is as follows. NQR complex catalyzes the reduction of ubiquinone-1 to ubiquinol by two successive reactions, coupled with the transport of Na(+) ions from the cytoplasm to the periplasm. NqrA to NqrE are probably involved in the second step, the conversion of ubisemiquinone to ubiquinol. This chain is Na(+)-translocating NADH-quinone reductase subunit B, found in Yersinia pestis.